We begin with the raw amino-acid sequence, 322 residues long: Gas vesicle protein L (322 aa).

The tract at residues 1-85 (MTEQSSGSAT…SEQATVDWST (85 aa)) is disordered. Residues 17-36 (ETAKQETGRKNEQPEERTVT) are compositionally biased toward basic and acidic residues. Over residues 45–57 (INTTTAESETGSE) the composition is skewed to polar residues. The span at 58-72 (QESKAGSEQESKAGS) shows a compositional bias: basic and acidic residues. The segment covering 73–85 (EQESEQATVDWST) has biased composition (polar residues).

This sequence belongs to the gas vesicle GvpF/GvpL family. As to quaternary structure, gvpF to GvpM interact with each other in vitro, and may form multi-subunit complex(es). Interacts with GvpC, GvpN and GvpO.

It is found in the gas vesicle. Functionally, proteins GvpF to GvpM might be involved in nucleating gas vesicle formation. A minor component of the gas vesicle. Gas vesicles are small, hollow, gas filled protein structures that are found in several microbial planktonic microorganisms. They allow positioning of halobacteria at the optimal depth for growth in the poorly aerated, shallow brine pools of their habitat. Expression of a 9.5 kb mc-vac DNA fragment containing 2 divergently transcribed regions (gvpD-gvpE-gvpF-gvpG-gvpH-gvpI-gvpJ-gvpK-gvpL-gvpM and gvpA-gvpC-gvpN-gvpO) allows H.volcanii to produce gas vesicles. This Haloferax mediterranei (strain ATCC 33500 / DSM 1411 / JCM 8866 / NBRC 14739 / NCIMB 2177 / R-4) (Halobacterium mediterranei) protein is Gas vesicle protein L.